A 570-amino-acid chain; its full sequence is Proline--tRNA ligase (570 aa).

It belongs to the class-II aminoacyl-tRNA synthetase family. ProS type 1 subfamily. Homodimer.

It is found in the cytoplasm. The enzyme catalyses tRNA(Pro) + L-proline + ATP = L-prolyl-tRNA(Pro) + AMP + diphosphate. In terms of biological role, catalyzes the attachment of proline to tRNA(Pro) in a two-step reaction: proline is first activated by ATP to form Pro-AMP and then transferred to the acceptor end of tRNA(Pro). As ProRS can inadvertently accommodate and process non-cognate amino acids such as alanine and cysteine, to avoid such errors it has two additional distinct editing activities against alanine. One activity is designated as 'pretransfer' editing and involves the tRNA(Pro)-independent hydrolysis of activated Ala-AMP. The other activity is designated 'posttransfer' editing and involves deacylation of mischarged Ala-tRNA(Pro). The misacylated Cys-tRNA(Pro) is not edited by ProRS. The chain is Proline--tRNA ligase from Clostridium botulinum (strain Eklund 17B / Type B).